The following is a 475-amino-acid chain: ATP synthase subunit beta (475 aa).

153 to 160 is a binding site for ATP; the sequence is GGAGVGKT.

This sequence belongs to the ATPase alpha/beta chains family. As to quaternary structure, F-type ATPases have 2 components, CF(1) - the catalytic core - and CF(0) - the membrane proton channel. CF(1) has five subunits: alpha(3), beta(3), gamma(1), delta(1), epsilon(1). CF(0) has three main subunits: a(1), b(2) and c(9-12). The alpha and beta chains form an alternating ring which encloses part of the gamma chain. CF(1) is attached to CF(0) by a central stalk formed by the gamma and epsilon chains, while a peripheral stalk is formed by the delta and b chains.

It localises to the cell membrane. The catalysed reaction is ATP + H2O + 4 H(+)(in) = ADP + phosphate + 5 H(+)(out). Produces ATP from ADP in the presence of a proton gradient across the membrane. The catalytic sites are hosted primarily by the beta subunits. The polypeptide is ATP synthase subunit beta (Limosilactobacillus reuteri (strain DSM 20016) (Lactobacillus reuteri)).